A 421-amino-acid polypeptide reads, in one-letter code: Protein MID1-COMPLEMENTING ACTIVITY 1 (421 aa).

The stretch at 188-218 (RFCEALKTENEKLQIELQRSQEHYDVAQCEV) forms a coiled coil. A disordered region spans residues 233 to 288 (EPDSEKELTKKASKKSERSSSMKTEYSYDEDSPKKSSTRAASRSTSNVSSGHDLLS). Positions 235–252 (DSEKELTKKASKKSERSS) are enriched in basic and acidic residues. The segment covering 270 to 282 (TRAASRSTSNVSS) has biased composition (low complexity). A helical transmembrane segment spans residues 346-362 (LMAYSLILSCCCYTCCV).

Expressed in roots, leaves, stems, flowers and siliques. Expressed in vascular tissues of cotyledons, leaves and primary root, in the promeristem and adjacent elongation zone of the primary root and in the shoot apical meristem. Detected in the stele and endodermis, but not in the cortex, epidermis or root cap, including the columella. Not expressed in root hairs or in mesophyll cells of leaves and cotyledons.

The protein localises to the cell membrane. Its activity is regulated as follows. Inhibited by GdCl(3), but not by verapamil. Functionally, calcium-permeable stretch-activated channel component. Involved in mechano-stimulated calcium uptake mechanism and in mechanosensing in the primary root. In Arabidopsis thaliana (Mouse-ear cress), this protein is Protein MID1-COMPLEMENTING ACTIVITY 1 (MCA1).